We begin with the raw amino-acid sequence, 426 residues long: Potassium channel subfamily K member 2 (426 aa).

Residues 1-61 (MLPSASRERP…TTINVMKWKT (61 aa)) lie on the Cytoplasmic side of the membrane. Important for GNG4 binding and L-glutamate release in astrocytes regions lie at residues 17-38 (AAPDLLDPKSAAQNSKPRLSFS) and 51-61 (DTTINVMKWKT). Residues 62–82 (VSTIFLVVVLYLIIGATVFKA) form a helical membrane-spanning segment. N110 and N134 each carry an N-linked (GlcNAc...) asparagine glycan. An intramembrane region (pore-forming) is located at residues 144 to 170 (LGSSFFFAGTVITTIGFGNISPRTEGG). K(+) contacts are provided by T157, I158, G159, and F160. Residues 157-162 (TIGFGN) are selectivity filter 1. A helical membrane pass occupies residues 172–192 (IFCIIYALLGIPLFGFLLAGV). Topologically, residues 193-223 (GDQLGTIFGKGIAKVEDTFIKWNVSQTKIRI) are cytoplasmic. The helical transmembrane segment at 224-244 (ISTIIFILFGCVLFVALPAII) threads the bilayer. Residues 253–283 (ALDAIYFVVITLTTIGFGDYVAGGSDIEYLD) constitute an intramembrane region (pore-forming). The K(+) site is built by T266, I267, G268, and F269. The tract at residues 266-271 (TIGFGD) is selectivity filter 2. Residues 288-308 (VVWFWILVGLAYFAAVLSMIG) form a helical membrane-spanning segment. Residues 309–426 (DWLRVISKKT…EEIAVIENIK (118 aa)) lie on the Cytoplasmic side of the membrane. Residues 313-326 (VISKKTKEEVGEFR) are interaction with AKAP5. The essential for chloroform and halothane sensitivity stretch occupies residues 337 to 385 (TAEFKETRRRLSVEIYDKFQRATSIKRKLSAELAGNHNQELTPCRRTLS). A Phosphoserine; by PKA modification is found at S348.

This sequence belongs to the two pore domain potassium channel (TC 1.A.1.8) family. As to quaternary structure, homodimer; disulfide-linked. Forms heterodimers with other 2-pore domain K(+) channel subunits, such as KCNK1, KCNK4, KCNK10 and KCNK18. Interacts with AKAP5; the channel is recruited to postsynaptic microdomains by AKAP5 where it can integrate neurotransmitter receptor signals. Part of a complex composed of AKAP5 and ADRB2. Upon AKAP5 binding, the channel is no longer sensitive to intracellular acidification, membrane stretch or arachidonic acid stimuli. Interacts with POPDC1; the interaction enhances KCNK2 surface expression and is inhibited by cAMP. Interacts (via N-terminus) with G-protein subunit GNG4 (via C-terminus); this interaction confers ion selectivity to L-glutamate and Cl(-) anions. Phosphorylation at Ser-348 controls the reversible conversion from a leak channel to a voltage-dependent channel. In terms of tissue distribution, detected in kidney, adrenal gland and brain where it is preferentially expressed in the amygdala but not found in thalamus, hypothalamus, hippocampus or substantia nigra.

The protein localises to the cell membrane. It is found in the endoplasmic reticulum membrane. Its subcellular location is the cell projection. The protein resides in the axon. It localises to the dendrite. The protein localises to the postsynaptic density membrane. It is found in the sarcolemma. It catalyses the reaction K(+)(in) = K(+)(out). It carries out the reaction L-glutamate(out) = L-glutamate(in). The enzyme catalyses chloride(in) = chloride(out). The catalysed reaction is Rb(+)(in) = Rb(+)(out). It catalyses the reaction Cs(+)(in) = Cs(+)(out). Activated by various stimuli including intracellular acidic pH, mechanical stretch and polyunsaturated fatty acids such as arachidonic acid. Activated by volatile anesthetics such as chloroform, halothane, and isoflurane. K(+) channel that conducts voltage-dependent outward rectifying currents upon membrane depolarization. Voltage sensing is coupled to K(+) electrochemical gradient in an 'ion flux gating' mode where outward but not inward ion flow opens the gate. Converts to voltage-independent 'leak' conductance mode upon stimulation by various stimuli including mechanical membrane stretch, acidic pH, heat and lipids. Reversibly converts between a voltage-insensitive K(+) 'leak' channel and a voltage-dependent outward rectifying K(+) channel in a phosphorylation-dependent manner. Homo- and heterodimerizes to form functional channels with distinct regulatory and gating properties. In trigeminal ganglia sensory neurons, the heterodimer of KCNK2/TREK-1 and KCNK18/TRESK inhibits neuronal firing and neurogenic inflammation by stabilizing the resting membrane potential at K(+) equilibrium potential as well as by regulating the threshold of action potentials and the spike frequency. At trigeminal A-beta afferent nerves, the heterodimer of KCNK2/TREK-1 and KCNK4/TRAAK is mostly coexpressed at nodes of Ranvier where it conducts voltage-independent mechanosensitive and thermosensitive currents, allowing rapid action potential repolarization, high speed and high frequence saltatory conduction on myelinated nerves to ensure prompt sensory responses. In hippocampal astrocytes, the heterodimer of KCNK2/TREK-1 and KCNK1/TWIK-1 allows passive K(+) conductance under basal conditions, but changes ion selectivity and becomes permeable to L-glutamate and Cl(-) ions upon binding to G-protein subunit GNG4 in stimulated astrocytes. Mediates rapid L-glutamate release in response to activation of G-protein-coupled receptors, such as F2R and CNR1. In hippocampal pyramidal neurons, the homodimer of KCNK2/TREK-1 contributes to gamma-aminobutyric acid (GABA) B-induced slow inhibitory postsynaptic potential. Associates with AKAP5 and Gs-protein-coupled receptor B2AR at postsynaptic dense bodies and converts to a leak channel no longer sensitive to stimulation by arachidonic acid, acidic pH or mechanical stress, nor inhibited by Gq-coupled receptors but still under the negative control of Gs-coupled receptors. Permeable to other monovalent cations such as Rb(+) and Cs(+). Functionally, does not display channel activity but reduces the channel activity of isoform 1 and isoform 2 and reduces cell surface expression of isoform 2. This chain is Potassium channel subfamily K member 2, found in Homo sapiens (Human).